A 428-amino-acid chain; its full sequence is Glutamate-1-semialdehyde 2,1-aminomutase (428 aa).

An N6-(pyridoxal phosphate)lysine modification is found at K267.

Belongs to the class-III pyridoxal-phosphate-dependent aminotransferase family. HemL subfamily. As to quaternary structure, homodimer. It depends on pyridoxal 5'-phosphate as a cofactor.

The protein resides in the cytoplasm. It carries out the reaction (S)-4-amino-5-oxopentanoate = 5-aminolevulinate. It functions in the pathway porphyrin-containing compound metabolism; protoporphyrin-IX biosynthesis; 5-aminolevulinate from L-glutamyl-tRNA(Glu): step 2/2. Its pathway is porphyrin-containing compound metabolism; chlorophyll biosynthesis. This is Glutamate-1-semialdehyde 2,1-aminomutase from Prochlorococcus marinus (strain MIT 9303).